We begin with the raw amino-acid sequence, 280 residues long: Elongation factor 1-delta (280 aa).

An N-acetylalanine modification is found at A2. K17 carries the N6-acetyllysine modification. Residues S37, S44, S60, S86, and S106 each carry the phosphoserine modification. K107 carries the post-translational modification N6-acetyllysine. Residues 113-171 (SALEKSSPAHRATTPQTQHVSPMRQVEPPSRKAATATEDDEDDDIDLFGSDEEEDKEAT) are disordered. K117 carries the post-translational modification N6-acetyllysine; alternate. K117 carries the post-translational modification N6-succinyllysine; alternate. S119 is subject to Phosphoserine. A Phosphothreonine modification is found at T129. S133 carries the phosphoserine modification. T147 is modified (phosphothreonine). Positions 149 to 168 (TEDDEDDDIDLFGSDEEEDK) are enriched in acidic residues. Residue S162 is modified to Phosphoserine; by CK2.

This sequence belongs to the EF-1-beta/EF-1-delta family. As to quaternary structure, EF-1 is composed of 4 subunits: alpha, beta, delta, and gamma.

In terms of biological role, EF-1-beta and EF-1-delta stimulate the exchange of GDP bound to EF-1-alpha to GTP. The chain is Elongation factor 1-delta (EEF1D) from Bos taurus (Bovine).